The sequence spans 270 residues: ES1 protein, mitochondrial (270 aa).

In terms of tissue distribution, expressed specifically in the inner segments of cone photoreceptor cells of the retina (at protein level).

Its subcellular location is the mitochondrion. In terms of biological role, plays a role in promoting mitochondrial enlargement in cone photoreceptor cells in a fusion-independent and ATP-dependent manner. The chain is ES1 protein, mitochondrial from Danio rerio (Zebrafish).